Here is a 514-residue protein sequence, read N- to C-terminus: H/ACA ribonucleoprotein complex subunit DKC1 (514 aa).

An N-acetylalanine modification is found at A2. A nucleolar localization region spans residues 2–21; the sequence is ADAEVIILPKKHKKKKERKS. K20 is covalently cross-linked (Glycyl lysine isopeptide (Lys-Gly) (interchain with G-Cter in SUMO2)). A Phosphoserine modification is found at S21. Residues K39 and K43 each participate in a glycyl lysine isopeptide (Lys-Gly) (interchain with G-Cter in SUMO2) cross-link. D125 (nucleophile) is an active-site residue. A Glycyl lysine isopeptide (Lys-Gly) (interchain with G-Cter in SUMO2) cross-link involves residue K191. One can recognise a PUA domain in the interval 296–371; it reads HKRLVMKDSA…IVAKIKRVIM (76 aa). S387 is modified (phosphoserine). K394 participates in a covalent cross-link: Glycyl lysine isopeptide (Lys-Gly) (interchain with G-Cter in SUMO2). K413 participates in a covalent cross-link: Glycyl lysine isopeptide (Lys-Gly) (interchain with G-Cter in SUMO1); alternate. Residue K413 forms a Glycyl lysine isopeptide (Lys-Gly) (interchain with G-Cter in SUMO2); alternate linkage. Residues K424 and K433 each participate in a glycyl lysine isopeptide (Lys-Gly) (interchain with G-Cter in SUMO2) cross-link. The interval 443-514 is disordered; sequence KTAKRKRESE…KAKEVELVSE (72 aa). The segment at 446–514 is nuclear and nucleolar localization; that stretch reads KRKRESESES…KAKEVELVSE (69 aa). Residues S451, S453, and S455 each carry the phosphoserine modification. Position 458 is a phosphothreonine (T458). K467 participates in a covalent cross-link: Glycyl lysine isopeptide (Lys-Gly) (interchain with G-Cter in SUMO2). Residues 468–480 are compositionally biased toward basic residues; the sequence is KEKKKSKKDKKAK. A phosphoserine mark is found at S485, S494, and S513.

This sequence belongs to the pseudouridine synthase TruB family. In terms of assembly, part of the H/ACA small nucleolar ribonucleoprotein (H/ACA snoRNP) complex, which contains NHP2/NOLA2, GAR1/NOLA1, NOP10/NOLA3, and DKC1/NOLA4, which is presumed to be the catalytic subunit. The complex contains a stable core formed by binding of one or two NOP10-DKC1 heterodimers to NHP2; GAR1 subsequently binds to this core via DKC1. The complex binds a box H/ACA small nucleolar RNA (snoRNA), which may target the specific site of modification within the RNA substrate. During assembly, the complex contains NAF1 instead of GAR1/NOLA1. The complex also interacts with TERC, which contains a 3'-terminal domain related to the box H/ACA snoRNAs. Specific interactions with snoRNAs or TERC are mediated by GAR1 and NHP2. Associates with NOLC1/NOPP140. H/ACA snoRNPs interact with the SMN complex, consisting of SMN1 or SMN2, GEMIN2/SIP1, DDX20/GEMIN3, and GEMIN4. This is mediated by interaction between GAR1 and SMN1 or SMN2. The SMN complex may be required for correct assembly of the H/ACA snoRNP complex. Component of the telomerase holoenzyme complex composed of one molecule of TERT, one molecule of WRAP53/TCAB1, two molecules of H/ACA ribonucleoprotein complex subunits DKC1, NOP10, NHP2 and GAR1, and a telomerase RNA template component (TERC). The telomerase holoenzyme complex is associated with TEP1, SMG6/EST1A and POT1. Interacts with SHQ1; this interaction may lead to the stabilization of DKC1, from the time of its synthesis until its association with NOP10, NHP2, and NAF1 at the nascent H/ACA RNA. Interacts with HMBOX1. Interacts with DHX36. As to expression, ubiquitously expressed.

It is found in the nucleus. It localises to the nucleolus. The protein resides in the cajal body. The protein localises to the cytoplasm. The catalysed reaction is uridine in 5S rRNA = pseudouridine in 5S rRNA. Functionally, catalytic subunit of H/ACA small nucleolar ribonucleoprotein (H/ACA snoRNP) complex, which catalyzes pseudouridylation of rRNA. This involves the isomerization of uridine such that the ribose is subsequently attached to C5, instead of the normal N1. Each rRNA can contain up to 100 pseudouridine ('psi') residues, which may serve to stabilize the conformation of rRNAs. Required for ribosome biogenesis and telomere maintenance. Also required for correct processing or intranuclear trafficking of TERC, the RNA component of the telomerase reverse transcriptase (TERT) holoenzyme. In terms of biological role, promotes cell to cell and cell to substratum adhesion, increases the cell proliferation rate and leads to cytokeratin hyper-expression. The polypeptide is H/ACA ribonucleoprotein complex subunit DKC1 (Homo sapiens (Human)).